The chain runs to 53 residues: Cytochrome c-552 (53 aa).

Heme c contacts are provided by Cys19, Cys22, His23, and Met44.

In terms of processing, binds 1 heme c group covalently per subunit.

The protein localises to the cell membrane. This chain is Cytochrome c-552, found in Schinkia azotoformans (Bacillus azotoformans).